The chain runs to 273 residues: Flagellin FljK (273 aa).

It belongs to the bacterial flagellin family. In terms of assembly, in C.crescentus, the flagellar filament is composed of multiple flagellins of 29 kDa; 27 kDa and 25 kDa.

Its subcellular location is the secreted. It is found in the bacterial flagellum. In terms of biological role, flagellin is the subunit protein which polymerizes to form the filaments of bacterial flagella. This chain is Flagellin FljK (fljK), found in Caulobacter vibrioides (strain ATCC 19089 / CIP 103742 / CB 15) (Caulobacter crescentus).